Reading from the N-terminus, the 125-residue chain is Ribonuclease P protein component (125 aa).

Belongs to the RnpA family. Consists of a catalytic RNA component (M1 or rnpB) and a protein subunit.

The catalysed reaction is Endonucleolytic cleavage of RNA, removing 5'-extranucleotides from tRNA precursor.. In terms of biological role, RNaseP catalyzes the removal of the 5'-leader sequence from pre-tRNA to produce the mature 5'-terminus. It can also cleave other RNA substrates such as 4.5S RNA. The protein component plays an auxiliary but essential role in vivo by binding to the 5'-leader sequence and broadening the substrate specificity of the ribozyme. The protein is Ribonuclease P protein component of Idiomarina loihiensis (strain ATCC BAA-735 / DSM 15497 / L2-TR).